Here is a 265-residue protein sequence, read N- to C-terminus: MATLLRPVLRRLCGLPGLQRPAAEMPLRARSDGAGPLYSHHLPTSPLQKGLLAAGSAAMALYNPYRHDMVAVLGETTGHRTLKVLRDQMRRDPEGAQILQERPRISTSTLDLGKLQSLPEGSLGREYLRFLDVNRVSPDTRAPTRFVDDEELAYVIQRYREVHDMLHTLLGMPTNILGEIVVKWFEAVQTGLPMCILGAFFGPIRLGAQSLQVLVSELIPWAVQNGRRAPCVLNLYYERRWEQSLRALREELGITAPPMHVQGLA.

Residues 1–30 (MATLLRPVLRRLCGLPGLQRPAAEMPLRAR) constitute a mitochondrion transit peptide. Position 108 is a phosphoserine (Ser108). 4 residues coordinate Zn(2+): His163, Asp164, His167, and Glu179.

Belongs to the COQ4 family. As to quaternary structure, component of a multi-subunit COQ enzyme complex, composed of at least COQ3, COQ4, COQ5, COQ6, COQ7 and COQ9. Zn(2+) is required as a cofactor. Expressed ubiquitously, but at high levels in liver, lung and pancreas.

It localises to the mitochondrion inner membrane. It catalyses the reaction 4-hydroxy-3-methoxy-5-(all-trans-decaprenyl)benzoate + H(+) = 2-methoxy-6-(all-trans-decaprenyl)phenol + CO2. The protein operates within cofactor biosynthesis; ubiquinone biosynthesis. Its function is as follows. Lyase that catalyzes the C1-decarboxylation of 4-hydroxy-3-methoxy-5-(all-trans-decaprenyl)benzoic acid into 2-methoxy-6-(all-trans-decaprenyl)phenol during ubiquinone biosynthesis. This chain is Ubiquinone biosynthesis protein COQ4 homolog, mitochondrial, found in Homo sapiens (Human).